We begin with the raw amino-acid sequence, 235 residues long: Putative N-acetylmannosamine-6-phosphate 2-epimerase (235 aa).

It belongs to the NanE family.

It catalyses the reaction an N-acyl-D-glucosamine 6-phosphate = an N-acyl-D-mannosamine 6-phosphate. Its pathway is amino-sugar metabolism; N-acetylneuraminate degradation; D-fructose 6-phosphate from N-acetylneuraminate: step 3/5. Its function is as follows. Converts N-acetylmannosamine-6-phosphate (ManNAc-6-P) to N-acetylglucosamine-6-phosphate (GlcNAc-6-P). The sequence is that of Putative N-acetylmannosamine-6-phosphate 2-epimerase from Photobacterium profundum (strain SS9).